The sequence spans 44 residues: Diuretic hormone (44 aa).

Val44 carries the valine amide modification.

Its subcellular location is the secreted. Its function is as follows. Regulation of fluid secretion. Stimulates primary urine secretion by Malpighian tubules and causes a dose-dependent stimulation of cAMP levels in the tubules. May act as clearance peptide in that it may remove metabolic waste from the hemolymph. The polypeptide is Diuretic hormone (Stomoxys calcitrans (Stable fly)).